The primary structure comprises 129 residues: Small ribosomal subunit protein uS11 (129 aa).

This sequence belongs to the universal ribosomal protein uS11 family. In terms of assembly, part of the 30S ribosomal subunit. Interacts with proteins S7 and S18. Binds to IF-3.

Located on the platform of the 30S subunit, it bridges several disparate RNA helices of the 16S rRNA. Forms part of the Shine-Dalgarno cleft in the 70S ribosome. This Caulobacter vibrioides (strain ATCC 19089 / CIP 103742 / CB 15) (Caulobacter crescentus) protein is Small ribosomal subunit protein uS11.